The chain runs to 527 residues: Exodeoxyribonuclease 7 large subunit (527 aa).

The disordered stretch occupies residues 499 to 527; sequence AGEEGAPPPAAPKKRASRPVVPTKQGSLF.

This sequence belongs to the XseA family. Heterooligomer composed of large and small subunits.

Its subcellular location is the cytoplasm. The catalysed reaction is Exonucleolytic cleavage in either 5'- to 3'- or 3'- to 5'-direction to yield nucleoside 5'-phosphates.. In terms of biological role, bidirectionally degrades single-stranded DNA into large acid-insoluble oligonucleotides, which are then degraded further into small acid-soluble oligonucleotides. This Sinorhizobium fredii (strain NBRC 101917 / NGR234) protein is Exodeoxyribonuclease 7 large subunit.